The primary structure comprises 119 residues: Protein TusC (119 aa).

Belongs to the DsrF/TusC family. As to quaternary structure, heterohexamer, formed by a dimer of trimers. The hexameric TusBCD complex contains 2 copies each of TusB, TusC and TusD. The TusBCD complex interacts with TusE.

It localises to the cytoplasm. In terms of biological role, part of a sulfur-relay system required for 2-thiolation of 5-methylaminomethyl-2-thiouridine (mnm(5)s(2)U) at tRNA wobble positions. This is Protein TusC from Photorhabdus laumondii subsp. laumondii (strain DSM 15139 / CIP 105565 / TT01) (Photorhabdus luminescens subsp. laumondii).